The sequence spans 200 residues: Thymidine kinase (200 aa).

ATP contacts are provided by residues 9–16 and 88–91; these read STMNAGKS and DEAH. Glu-89 (proton acceptor) is an active-site residue. The Zn(2+) site is built by Cys-146, Cys-148, Cys-183, and His-186.

The protein belongs to the thymidine kinase family. In terms of assembly, homotetramer.

The protein localises to the cytoplasm. The catalysed reaction is thymidine + ATP = dTMP + ADP + H(+). The protein is Thymidine kinase of Rhizobium etli (strain ATCC 51251 / DSM 11541 / JCM 21823 / NBRC 15573 / CFN 42).